Consider the following 1909-residue polypeptide: Endoribonuclease Dicer homolog 1 (1909 aa).

The segment at 99–177 (TVKENGLQKN…NNKKKRECNN (79 aa)) is disordered. The segment covering 110–124 (GKRDEFSKEEGDKDR) has biased composition (basic and acidic residues). Positions 131 to 146 (SYQSERSNLSGRGHVN) are enriched in polar residues. A compositionally biased stretch (basic and acidic residues) spans 147 to 177 (NSREGDRFMNRKRTRNWDEAGNNKKKRECNN). A Helicase ATP-binding domain is found at 256–433 (VLEQAKAKNT…QVDCAIKIRN (178 aa)). 269–276 (LETGAGKT) is a binding site for ATP. The short motif at 378 to 381 (DECH) is the DECH box element. The Helicase C-terminal domain occupies 651–812 (SLIKLLLKYQ…RTDLSHLKDT (162 aa)). Residues 840–935 (AVGLVHFYCS…LPDKGSGQDA (96 aa)) enclose the Dicer dsRNA-binding fold domain. Residues 929–952 (KGSGQDAEKADQDDEGEPVPGTAR) are disordered. One can recognise a PAZ domain in the interval 1189 to 1318 (EVEEDLSKGK…LPPELCVVHP (130 aa)). RNase III domains are found at residues 1342-1518 (LAVQ…VEGG) and 1559-1707 (FVGL…LDSG). Residues Glu1597, Asp1693, and Glu1696 each contribute to the Mg(2+) site. DRBM domains lie at 1733–1796 (HPVR…ALKE) and 1831–1906 (FTRQ…LLNK). Residues 1801 to 1831 (ESKEKHINNGNAGEDQGENENGNKKNGHQPF) form a disordered region.

The protein belongs to the helicase family. Dicer subfamily. In terms of assembly, interacts (via N-terminus) with DDL. Interacts (via DRBM domains) with DRB1, DRB2 and DRB5. May interact with AGO1 or AGO10 through their common PAZ domains. It depends on Mg(2+) as a cofactor. Mn(2+) serves as cofactor. As to expression, highly expressed in flowers and seeds and detected in leaves and stems. Found in ovule integuments, inflorescence and floral meristems, stigma of flowers until just before pollination, vasculature of the funiculus, and embryo.

The protein resides in the nucleus. In terms of biological role, ribonuclease (RNase) III involved in RNA-mediated post-transcriptional gene silencing (PTGS). Functions in the microRNAs (miRNAs) biogenesis pathway by cleaving primary miRNAs (pri-miRNAs) and precursor miRNAs (pre-miRNAs). Functions with DRB1/HYL1 and SERRATE proteins for accurate pri-miRNAs to miRNAs processing. Indirectly involved in the production of trans-acting small interfering RNAs (ta-siRNAs) derived from the TAS1, TAS2 or TAS3 endogenous transcripts by participating in the production of their initiating miRNAs. Involved in the processing of natural siRNAs (nat-siRNAs, derived from cis-natural antisense transcripts) by cleaving 24 nucleotide nat-siRNAs into 21 nucleotide nat-siRNAs. Can produce RDR6-dependent endogenous ta-siRNAs derived from TAS1 and TAS2. Required for the production of 30-40 nucleotide bacterial-induced long siRNAs (lsiRNA). Acts redundantly with DICER-LIKE 3 (DCL3) to promote flowering via repression of FLOWERING LOCUS C (FLC). Represses antiviral RNA silencing through negative regulation of the expression of DCL4 and DCL3. This Arabidopsis thaliana (Mouse-ear cress) protein is Endoribonuclease Dicer homolog 1 (DCL1).